Here is a 201-residue protein sequence, read N- to C-terminus: Large ribosomal subunit protein eL15 (201 aa).

It belongs to the eukaryotic ribosomal protein eL15 family.

In Quercus suber (Cork oak), this protein is Large ribosomal subunit protein eL15 (RPL15).